Reading from the N-terminus, the 910-residue chain is Eukaryotic translation initiation factor 3 subunit C (910 aa).

The disordered stretch occupies residues 1–21 (MSRFFANGSESESESSEEEIQ). Acidic residues predominate over residues 11–20 (SESESSEEEI). Residues serine 34, serine 165, serine 176, and serine 185 each carry the phosphoserine modification. Positions 157–279 (FREAPDQESE…IRKRAEDDED (123 aa)) are disordered. The span at 162-186 (DQESEAEDEVVALESDGGDAGDDSD) shows a compositional bias: acidic residues. The span at 194–207 (AVPKAVKSAPAKAA) shows a compositional bias: low complexity. The segment covering 209 to 235 (ADDDDSDDSIDWDSDSESETESSDDEN) has biased composition (acidic residues). Residues 240-268 (MRERFLKRTTEKEEKDDDKRKDKRKEQKT) are compositionally biased toward basic and acidic residues. The PCI domain occupies 639–815 (FHMHINLELL…ETVGMHRSEP (177 aa)). Positions 847–910 (FFQRGNMGNR…QQQVQTIDEE (64 aa)) are disordered. A compositionally biased stretch (low complexity) spans 862 to 874 (NRNQNNQGGNWLG). Over residues 882 to 891 (RNRNQRGHHK) the composition is skewed to basic residues. The span at 895 to 910 (DRQQQQQQQVQTIDEE) shows a compositional bias: low complexity.

This sequence belongs to the eIF-3 subunit C family. In terms of assembly, component of the eukaryotic translation initiation factor 3 (eIF-3) complex. The eIF-3 complex interacts with pix.

The protein resides in the cytoplasm. Functionally, component of the eukaryotic translation initiation factor 3 (eIF-3) complex, which is involved in protein synthesis of a specialized repertoire of mRNAs and, together with other initiation factors, stimulates binding of mRNA and methionyl-tRNAi to the 40S ribosome. The eIF-3 complex specifically targets and initiates translation of a subset of mRNAs involved in cell proliferation. The protein is Eukaryotic translation initiation factor 3 subunit C of Drosophila melanogaster (Fruit fly).